Reading from the N-terminus, the 488-residue chain is Prostaglandin E2 receptor EP4 subtype (488 aa).

Residues 1–19 lie on the Extracellular side of the membrane; it reads MSTPGVNSSASLSPDRLNS. Asn-7 is a glycosylation site (N-linked (GlcNAc...) asparagine). The chain crosses the membrane as a helical span at residues 20 to 43; sequence PVTIPAVMFIFGVVGNLVAIVVLC. The Cytoplasmic portion of the chain corresponds to 44 to 55; that stretch reads KSRKEQKETTFY. The helical transmembrane segment at 56–79 threads the bilayer; it reads TLVCGLAVTDLLGTLLVSPVTIAT. Residues 80 to 96 are Extracellular-facing; it reads YMKGQWPGGQPLCEYST. Cys-92 and Cys-170 are disulfide-bonded. Residues 97–115 form a helical membrane-spanning segment; that stretch reads FILLFFSLSGLSIICAMSV. Residues 116 to 135 lie on the Cytoplasmic side of the membrane; sequence ERYLAINHAYFYSHYVDKRL. Residues 136–160 form a helical membrane-spanning segment; it reads AGLTLFAVYASNVLFCALPNMGLGS. At 161 to 184 the chain is on the extracellular side; the sequence is SRLQYPDTWCFIDWTTNVTAHAAY. Residues 185-211 form a helical membrane-spanning segment; it reads SYMYAGFSSFLILATVLCNVLVCGALL. Over 212–267 the chain is Cytoplasmic; that stretch reads RMHRQFMRRTSLGTEQHHAAAAASVASRGHPAASPALPRLSDFRRRRSFRRIAGAE. The chain crosses the membrane as a helical span at residues 268–295; that stretch reads IQMVILLIATSLVVLICSIPLVVRVFVN. Over 296–312 the chain is Extracellular; the sequence is QLYQPSLEREVSKNPDL. Residues 313–332 traverse the membrane as a helical segment; it reads QAIRIASVNPILDPWIYILL. Residues 333–488 are Cytoplasmic-facing; sequence RKTVLSKAIE…ETLNLSEKCI (156 aa). Residues 356-376 form a disordered region; that stretch reads RERSGQHCSDSQRTSSAMSGH. Positions 361–376 are enriched in polar residues; sequence QHCSDSQRTSSAMSGH. A phosphoserine mark is found at Ser-374, Ser-377, Ser-379, and Ser-382. Positions 437–449 are enriched in polar residues; it reads SETSDSSQGQDSE. Residues 437–475 form a disordered region; sequence SETSDSSQGQDSESVLLVDEAGGSGRAGPAPKGSSLQVT.

It belongs to the G-protein coupled receptor 1 family. In terms of assembly, interacts with FEM1A. Phosphorylation mediates agonist-mediated desensitization by promoting cytoplasmic retention. As to expression, high in intestine and in peripheral blood mononuclear cells; low in lung, kidney, thymus, uterus, vasculature and brain. Not found in liver, heart, retina oe skeletal muscle.

The protein resides in the cell membrane. Its function is as follows. Receptor for prostaglandin E2 (PGE2). The activity of this receptor is mediated by G(s) proteins that stimulate adenylate cyclase. Has a relaxing effect on smooth muscle. May play an important role in regulating renal hemodynamics, intestinal epithelial transport, adrenal aldosterone secretion, and uterine function. In Homo sapiens (Human), this protein is Prostaglandin E2 receptor EP4 subtype (PTGER4).